A 245-amino-acid polypeptide reads, in one-letter code: 2,3,4,5-tetrahydropyridine-2,6-dicarboxylate N-acetyltransferase (245 aa).

The protein belongs to the transferase hexapeptide repeat family. DapH subfamily.

The enzyme catalyses (S)-2,3,4,5-tetrahydrodipicolinate + acetyl-CoA + H2O = L-2-acetamido-6-oxoheptanedioate + CoA. It participates in amino-acid biosynthesis; L-lysine biosynthesis via DAP pathway; LL-2,6-diaminopimelate from (S)-tetrahydrodipicolinate (acetylase route): step 1/3. Its function is as follows. Catalyzes the transfer of an acetyl group from acetyl-CoA to tetrahydrodipicolinate. This Methanopyrus kandleri (strain AV19 / DSM 6324 / JCM 9639 / NBRC 100938) protein is 2,3,4,5-tetrahydropyridine-2,6-dicarboxylate N-acetyltransferase.